Consider the following 103-residue polypeptide: MSLLEQVSVSKKANIYFDGKVASRSVFLADGSKQTLGVVLPGEYEFSTSQGEVMEVTSGRFEVLLPESTLWQEFSEGTQFELAANVSFKIRNTAIAEYCCSYL.

This sequence belongs to the nucleoside phosphorylase PpnP family.

It catalyses the reaction a purine D-ribonucleoside + phosphate = a purine nucleobase + alpha-D-ribose 1-phosphate. The enzyme catalyses adenosine + phosphate = alpha-D-ribose 1-phosphate + adenine. The catalysed reaction is cytidine + phosphate = cytosine + alpha-D-ribose 1-phosphate. It carries out the reaction guanosine + phosphate = alpha-D-ribose 1-phosphate + guanine. It catalyses the reaction inosine + phosphate = alpha-D-ribose 1-phosphate + hypoxanthine. The enzyme catalyses thymidine + phosphate = 2-deoxy-alpha-D-ribose 1-phosphate + thymine. The catalysed reaction is uridine + phosphate = alpha-D-ribose 1-phosphate + uracil. It carries out the reaction xanthosine + phosphate = alpha-D-ribose 1-phosphate + xanthine. Its function is as follows. Catalyzes the phosphorolysis of diverse nucleosides, yielding D-ribose 1-phosphate and the respective free bases. Can use uridine, adenosine, guanosine, cytidine, thymidine, inosine and xanthosine as substrates. Also catalyzes the reverse reactions. This chain is Pyrimidine/purine nucleoside phosphorylase, found in Shewanella putrefaciens (strain CN-32 / ATCC BAA-453).